Reading from the N-terminus, the 326-residue chain is Probable cell division protein WhiA (326 aa).

Residues 275-308 (SLDELGHHADPPMTKDAVAGRIRRLLAMADKKAV) constitute a DNA-binding region (H-T-H motif).

This sequence belongs to the WhiA family.

Functionally, involved in cell division and chromosome segregation. This Clavibacter sepedonicus (Clavibacter michiganensis subsp. sepedonicus) protein is Probable cell division protein WhiA.